Consider the following 250-residue polypeptide: MKIDILTLFPEMFAPLEHSIVGKAKERGLLEINYHNFRENAEKSRHVDDEPYGGGQGMLLRAQPIFDTIDKIDAQKARVILLDPAGRTFDQDFAEELSKEDELIFICGHYEGYDERIKSLVTDEVSLGDFVLTGGELAAMTMVDATVRLIPEVIGKETSHQDDSFSSGLLEYPQYTRPYDYLGMTVPDVLMSGHHENIRKWRLEQSLRKTLERRPDLLENYAMTDEERLILEKIKTEIERTDTVNEQNNL.

S-adenosyl-L-methionine contacts are provided by residues G108 and 127–132; that span reads LGDFVL.

The protein belongs to the RNA methyltransferase TrmD family. As to quaternary structure, homodimer.

The protein resides in the cytoplasm. It catalyses the reaction guanosine(37) in tRNA + S-adenosyl-L-methionine = N(1)-methylguanosine(37) in tRNA + S-adenosyl-L-homocysteine + H(+). Specifically methylates guanosine-37 in various tRNAs. In Streptococcus agalactiae serotype Ia (strain ATCC 27591 / A909 / CDC SS700), this protein is tRNA (guanine-N(1)-)-methyltransferase.